The chain runs to 330 residues: Methionyl-tRNA formyltransferase (330 aa).

116–119 (SLLP) contacts (6S)-5,6,7,8-tetrahydrofolate.

The protein belongs to the Fmt family.

The enzyme catalyses L-methionyl-tRNA(fMet) + (6R)-10-formyltetrahydrofolate = N-formyl-L-methionyl-tRNA(fMet) + (6S)-5,6,7,8-tetrahydrofolate + H(+). In terms of biological role, attaches a formyl group to the free amino group of methionyl-tRNA(fMet). The formyl group appears to play a dual role in the initiator identity of N-formylmethionyl-tRNA by promoting its recognition by IF2 and preventing the misappropriation of this tRNA by the elongation apparatus. The chain is Methionyl-tRNA formyltransferase from Nitratidesulfovibrio vulgaris (strain DP4) (Desulfovibrio vulgaris).